Here is a 344-residue protein sequence, read N- to C-terminus: Uroporphyrinogen decarboxylase (344 aa).

Substrate is bound by residues 26 to 30 (RQAGR), aspartate 76, tyrosine 151, serine 206, and histidine 321.

Belongs to the uroporphyrinogen decarboxylase family. In terms of assembly, homodimer.

It is found in the cytoplasm. It carries out the reaction uroporphyrinogen III + 4 H(+) = coproporphyrinogen III + 4 CO2. It participates in porphyrin-containing compound metabolism; protoporphyrin-IX biosynthesis; coproporphyrinogen-III from 5-aminolevulinate: step 4/4. Functionally, catalyzes the decarboxylation of four acetate groups of uroporphyrinogen-III to yield coproporphyrinogen-III. In Sinorhizobium fredii (strain NBRC 101917 / NGR234), this protein is Uroporphyrinogen decarboxylase.